Reading from the N-terminus, the 484-residue chain is Probable cytosol aminopeptidase (484 aa).

The Mn(2+) site is built by Lys256 and Asp261. The active site involves Lys268. 3 residues coordinate Mn(2+): Asp279, Asp338, and Glu340. Residue Arg342 is part of the active site.

Belongs to the peptidase M17 family. Mn(2+) serves as cofactor.

The protein localises to the cytoplasm. It carries out the reaction Release of an N-terminal amino acid, Xaa-|-Yaa-, in which Xaa is preferably Leu, but may be other amino acids including Pro although not Arg or Lys, and Yaa may be Pro. Amino acid amides and methyl esters are also readily hydrolyzed, but rates on arylamides are exceedingly low.. The catalysed reaction is Release of an N-terminal amino acid, preferentially leucine, but not glutamic or aspartic acids.. Functionally, presumably involved in the processing and regular turnover of intracellular proteins. Catalyzes the removal of unsubstituted N-terminal amino acids from various peptides. The protein is Probable cytosol aminopeptidase of Methylibium petroleiphilum (strain ATCC BAA-1232 / LMG 22953 / PM1).